The chain runs to 382 residues: MKLHEYEAKELFSKYGVKIPPGKVALTPEEVLKIAREIGAPVVLKAQVVVAGRGKAGGIKVANSPEEAYELSKRMFGMNIKGLIVKKLYVTKFVEVEREMYLSLIIDRASRRYLFLASPVGGMDIEEIAKTSPEKIKRVYVDPATGLRDYHVRSIVSWLGFKQGTSQWQQAASIVQAMYRIMVDYDAELVESNPLAVTKEGEVIPLDARVIVDDNALFKHPELEKALEEDPRDVTEFEAYAKKIGFHYVELDGDVGIIGNGAGLTMATMDLVYHFGGRPANFLDIGGGASREVVKEAVKVLLHHPRVKVIFVNIFGGITRADEVALGIKEALAESGGTNKKIVVRMKGTNEELGRAILAEIGVPLFDSAEEAAKKAVELARV.

The region spanning 9-240 is the ATP-grasp domain; the sequence is KELFSKYGVK…PRDVTEFEAY (232 aa). Residues K45, 52–54, V94, and E99 contribute to the ATP site; that span reads GRG. Mg(2+)-binding residues include N193 and D207. Residues N260 and 317–319 contribute to the substrate site; that span reads GIT.

Belongs to the succinate/malate CoA ligase beta subunit family. As to quaternary structure, heterotetramer of two alpha and two beta subunits. Mg(2+) serves as cofactor.

The enzyme catalyses succinate + ATP + CoA = succinyl-CoA + ADP + phosphate. It carries out the reaction GTP + succinate + CoA = succinyl-CoA + GDP + phosphate. The protein operates within carbohydrate metabolism; tricarboxylic acid cycle; succinate from succinyl-CoA (ligase route): step 1/1. Its function is as follows. Succinyl-CoA synthetase functions in the citric acid cycle (TCA), coupling the hydrolysis of succinyl-CoA to the synthesis of either ATP or GTP and thus represents the only step of substrate-level phosphorylation in the TCA. The beta subunit provides nucleotide specificity of the enzyme and binds the substrate succinate, while the binding sites for coenzyme A and phosphate are found in the alpha subunit. This Pyrobaculum aerophilum (strain ATCC 51768 / DSM 7523 / JCM 9630 / CIP 104966 / NBRC 100827 / IM2) protein is Succinate--CoA ligase [ADP-forming] subunit beta.